The following is a 128-amino-acid chain: Cytochrome c-type biogenesis protein CcmE (128 aa).

The Cytoplasmic segment spans residues 1-8 (MQKRVRNR). Residues 9–29 (LITIIICFCSAALGISIVLYN) form a helical; Signal-anchor for type II membrane protein membrane-spanning segment. Residues 30–128 (LEKNIVFFLP…KHDENYRPPS (99 aa)) are Periplasmic-facing. Residues H120 and Y124 each coordinate heme.

It belongs to the CcmE/CycJ family.

It localises to the cell inner membrane. Heme chaperone required for the biogenesis of c-type cytochromes. Transiently binds heme delivered by CcmC and transfers the heme to apo-cytochromes in a process facilitated by CcmF and CcmH. This chain is Cytochrome c-type biogenesis protein CcmE, found in Rickettsia felis (strain ATCC VR-1525 / URRWXCal2) (Rickettsia azadi).